The following is a 249-amino-acid chain: Methylthioribulose-1-phosphate dehydratase (249 aa).

Residues His-103 and His-105 each contribute to the Zn(2+) site.

The protein belongs to the aldolase class II family. MtnB subfamily. The cofactor is Zn(2+).

It catalyses the reaction 5-(methylsulfanyl)-D-ribulose 1-phosphate = 5-methylsulfanyl-2,3-dioxopentyl phosphate + H2O. Its pathway is amino-acid biosynthesis; L-methionine biosynthesis via salvage pathway; L-methionine from S-methyl-5-thio-alpha-D-ribose 1-phosphate: step 2/6. Its function is as follows. Catalyzes the dehydration of methylthioribulose-1-phosphate (MTRu-1-P) into 2,3-diketo-5-methylthiopentyl-1-phosphate (DK-MTP-1-P). In Leptospira interrogans serogroup Icterohaemorrhagiae serovar copenhageni (strain Fiocruz L1-130), this protein is Methylthioribulose-1-phosphate dehydratase.